The following is a 440-amino-acid chain: Discs overgrown protein kinase (440 aa).

Residues 9–277 (YRLGRKIGSG…HLRKLFRNLF (269 aa)) form the Protein kinase domain. ATP contacts are provided by residues 15 to 23 (IGSGSFGDI) and lysine 38. The active-site Proton acceptor is the aspartate 128. Positions 221–224 (KRQK) are nuclear localization signal; essential for interaction with Bdbt and important for nuclear localization. Phosphoserine occurs at positions 333 and 334. The tract at residues 376-440 (SQLIGGNGLN…GGGGGVGNAK (65 aa)) is disordered. Over residues 413–440 (QGGGGGGGGVGVGGMPSGGGGGGVGNAK) the composition is skewed to gly residues.

It belongs to the protein kinase superfamily. CK1 Ser/Thr protein kinase family. Casein kinase I subfamily. In terms of assembly, forms a complex with per. Interacts with Dlish. Interacts (via nuclear localization signal) with Bdbt. Detected in the head (at protein level). Expressed in photoreceptor cells of the eyes as well as in the region situated between the optic lobe and the central brain.

It is found in the nucleus. Its subcellular location is the cytoplasm. The protein localises to the cytosol. It catalyses the reaction L-seryl-[protein] + ATP = O-phospho-L-seryl-[protein] + ADP + H(+). The enzyme catalyses L-threonyl-[protein] + ATP = O-phospho-L-threonyl-[protein] + ADP + H(+). In terms of biological role, serine/threonine-protein kinase which is involved in the circadian rhythm pathway, viability and planar cell polarity. In the circadian rhythm pathway, phosphorylates the clock gene period (per) and targets it for degradation in the absence of timeless (tim), thus contributing to production of the circadian oscillations of the clock genes. Together with CkIalpha, regulates processing of ci by phosphorylating it, which promotes its binding to slmb, the F-box recognition component of the SCF(slmb) E3 ubiquitin-protein ligase. Involved in the inhibition of apoptosis during cell proliferation and growth arrest in imaginal disks. Also functions in planar cell polarity. The protein is Discs overgrown protein kinase (dco) of Drosophila melanogaster (Fruit fly).